A 362-amino-acid polypeptide reads, in one-letter code: MADEQFPAAATALEEYQSIEEQMASPEVVSNPDKLRKLGRRHAELGAIVGAYKTWLQVKDDLAAAQEMAGEDADFAEEAKRLEAELPGVEEKLRTALIPRDPDDARDTIMEIKAGTGGEEAALFAGDLLRMYTRYAEKRGWSVNVQSENTTELGGVKDVQIAIRAKGTPAPEDGVWASMKYEGGVHRVQRIPVTESQGRIQTSAAGVIVFPEADEDDDEIEIDPKDLKIDIFMSSGPGGQSVNTTYSAVRMTHLPTGITVNMQDEKSQIQNRAAALRVLKSRLLAMKHEQEAAEAADMRHSQVRSLDRSERIRTYNFPENRIVDHRTNYKAYNLDAVLDGDLQAVIDSDIQADEADRLANQQ.

N5-methylglutamine is present on Gln240.

This sequence belongs to the prokaryotic/mitochondrial release factor family. In terms of processing, methylated by PrmC. Methylation increases the termination efficiency of RF1.

The protein localises to the cytoplasm. Peptide chain release factor 1 directs the termination of translation in response to the peptide chain termination codons UAG and UAA. The chain is Peptide chain release factor 1 from Bifidobacterium longum subsp. infantis (strain ATCC 15697 / DSM 20088 / JCM 1222 / NCTC 11817 / S12).